The chain runs to 453 residues: Bifunctional protein GlmU (453 aa).

Residues 1–225 form a pyrophosphorylase region; that stretch reads MNIVILAAGT…EWETLGVNSK (225 aa). Residues 6–9, Lys-20, Gln-71, 76–77, 98–100, Gly-135, Glu-150, Asn-165, and Asn-223 each bind UDP-N-acetyl-alpha-D-glucosamine; these read LAAG, GT, and YGD. Asp-100 is a Mg(2+) binding site. Asn-223 is a binding site for Mg(2+). A linker region spans residues 226–246; that stretch reads AQLAELERIHQRNIAEALLVD. The N-acetyltransferase stretch occupies residues 247–453; it reads GVTLADPARL…GYVRPVKKKS (207 aa). Residues Arg-329 and Lys-347 each contribute to the UDP-N-acetyl-alpha-D-glucosamine site. His-359 (proton acceptor) is an active-site residue. Positions 362 and 373 each coordinate UDP-N-acetyl-alpha-D-glucosamine. Acetyl-CoA-binding positions include Ala-376, 382–383, Ser-401, and Ala-419; that span reads NY.

The protein in the N-terminal section; belongs to the N-acetylglucosamine-1-phosphate uridyltransferase family. In the C-terminal section; belongs to the transferase hexapeptide repeat family. As to quaternary structure, homotrimer. Mg(2+) is required as a cofactor.

The protein localises to the cytoplasm. The enzyme catalyses alpha-D-glucosamine 1-phosphate + acetyl-CoA = N-acetyl-alpha-D-glucosamine 1-phosphate + CoA + H(+). It carries out the reaction N-acetyl-alpha-D-glucosamine 1-phosphate + UTP + H(+) = UDP-N-acetyl-alpha-D-glucosamine + diphosphate. It participates in nucleotide-sugar biosynthesis; UDP-N-acetyl-alpha-D-glucosamine biosynthesis; N-acetyl-alpha-D-glucosamine 1-phosphate from alpha-D-glucosamine 6-phosphate (route II): step 2/2. The protein operates within nucleotide-sugar biosynthesis; UDP-N-acetyl-alpha-D-glucosamine biosynthesis; UDP-N-acetyl-alpha-D-glucosamine from N-acetyl-alpha-D-glucosamine 1-phosphate: step 1/1. Its pathway is bacterial outer membrane biogenesis; LPS lipid A biosynthesis. Functionally, catalyzes the last two sequential reactions in the de novo biosynthetic pathway for UDP-N-acetylglucosamine (UDP-GlcNAc). The C-terminal domain catalyzes the transfer of acetyl group from acetyl coenzyme A to glucosamine-1-phosphate (GlcN-1-P) to produce N-acetylglucosamine-1-phosphate (GlcNAc-1-P), which is converted into UDP-GlcNAc by the transfer of uridine 5-monophosphate (from uridine 5-triphosphate), a reaction catalyzed by the N-terminal domain. The sequence is that of Bifunctional protein GlmU from Burkholderia lata (strain ATCC 17760 / DSM 23089 / LMG 22485 / NCIMB 9086 / R18194 / 383).